The chain runs to 311 residues: Glutaminase (311 aa).

Residues S69, N120, E164, N171, Y195, Y247, and V265 each coordinate substrate.

This sequence belongs to the glutaminase family. In terms of assembly, homotetramer.

It catalyses the reaction L-glutamine + H2O = L-glutamate + NH4(+). This is Glutaminase from Colwellia psychrerythraea (strain 34H / ATCC BAA-681) (Vibrio psychroerythus).